We begin with the raw amino-acid sequence, 302 residues long: Sulfate adenylyltransferase subunit 2 (302 aa).

It belongs to the PAPS reductase family. CysD subfamily. Heterodimer composed of CysD, the smaller subunit, and CysN.

It carries out the reaction sulfate + ATP + H(+) = adenosine 5'-phosphosulfate + diphosphate. It participates in sulfur metabolism; hydrogen sulfide biosynthesis; sulfite from sulfate: step 1/3. With CysN forms the ATP sulfurylase (ATPS) that catalyzes the adenylation of sulfate producing adenosine 5'-phosphosulfate (APS) and diphosphate, the first enzymatic step in sulfur assimilation pathway. APS synthesis involves the formation of a high-energy phosphoric-sulfuric acid anhydride bond driven by GTP hydrolysis by CysN coupled to ATP hydrolysis by CysD. The polypeptide is Sulfate adenylyltransferase subunit 2 (Salmonella paratyphi A (strain AKU_12601)).